Reading from the N-terminus, the 347-residue chain is NADH-ubiquinone oxidoreductase chain 2 (347 aa).

The next 11 membrane-spanning stretches (helical) occupy residues 3–23 (PMIL…VMMS), 25–45 (HWFL…PVLM), 59–79 (YFLT…INLI), 96–116 (TLLT…FWVP), 122–142 (VSLN…LSLL), 149–169 (VNTN…GWGG), 178–198 (IMAY…IYNP), 201–221 (SLLN…LLMF), 239–259 (IITT…PLSG), 274–294 (DSVI…FFYM), and 326–346 (MTSL…AMIL).

It belongs to the complex I subunit 2 family. Core subunit of respiratory chain NADH dehydrogenase (Complex I) which is composed of 45 different subunits. Interacts with TMEM242.

The protein resides in the mitochondrion inner membrane. The enzyme catalyses a ubiquinone + NADH + 5 H(+)(in) = a ubiquinol + NAD(+) + 4 H(+)(out). Core subunit of the mitochondrial membrane respiratory chain NADH dehydrogenase (Complex I) which catalyzes electron transfer from NADH through the respiratory chain, using ubiquinone as an electron acceptor. Essential for the catalytic activity and assembly of complex I. This chain is NADH-ubiquinone oxidoreductase chain 2, found in Sylvisorex johnstoni (Johnston's forest shrew).